We begin with the raw amino-acid sequence, 35 residues long: Potassium channel toxin alpha-KTx 6.12 (35 aa).

Gln1 bears the Pyrrolidone carboxylic acid mark. 4 disulfide bridges follow: Cys4–Cys24, Cys10–Cys29, Cys14–Cys31, and Cys19–Cys34. The residue at position 35 (Lys35) is a Lysine amide.

Belongs to the short scorpion toxin superfamily. Potassium channel inhibitor family. Alpha-KTx 06 subfamily. Monomer. Expressed by the venom gland.

The protein resides in the secreted. Its function is as follows. High affinity blocker of Kv1.3/KCNA3 channels of human T cells. Blocks Kv1.2/KCNA2 with an order of magnitude smaller than for Kv1.3/KCNA3. The polypeptide is Potassium channel toxin alpha-KTx 6.12 (Anuroctonus phaiodactylus (Mafia scorpion)).